The following is a 140-amino-acid chain: Transcription antitermination protein NusB (140 aa).

Belongs to the NusB family.

Its function is as follows. Involved in transcription antitermination. Required for transcription of ribosomal RNA (rRNA) genes. Binds specifically to the boxA antiterminator sequence of the ribosomal RNA (rrn) operons. The chain is Transcription antitermination protein NusB from Streptococcus pneumoniae serotype 2 (strain D39 / NCTC 7466).